Consider the following 203-residue polypeptide: NAD(P)H-quinone oxidoreductase subunit M, chloroplastic (203 aa).

The transit peptide at 1 to 21 directs the protein to the chloroplast; that stretch reads MAASSSYMACAKFSMLGWLGG. A compositionally biased stretch (low complexity) spans 34–48; it reads SPQEQAEVQESQEVN. The interval 34 to 61 is disordered; that stretch reads SPQEQAEVQESQEVNAQEEEKVKQPVQP.

Belongs to the NDH complex subunit M family. Part of the chloroplast NDH complex, composed of a mixture of chloroplast and nucleus encoded subunits. Component of the NDH subcomplex A, at least composed of ndhH, ndhI, ndhJ, ndhK, ndhL, ndhM, ndhN and ndhO.

Its subcellular location is the plastid. It localises to the chloroplast thylakoid membrane. It carries out the reaction a plastoquinone + NADH + (n+1) H(+)(in) = a plastoquinol + NAD(+) + n H(+)(out). It catalyses the reaction a plastoquinone + NADPH + (n+1) H(+)(in) = a plastoquinol + NADP(+) + n H(+)(out). NDH shuttles electrons from NAD(P)H:plastoquinone, via FMN and iron-sulfur (Fe-S) centers, to quinones in the photosynthetic chain and possibly in a chloroplast respiratory chain. The immediate electron acceptor for the enzyme in this species is believed to be plastoquinone. Couples the redox reaction to proton translocation, and thus conserves the redox energy in a proton gradient. This Populus jackii (Balm of Gilead) protein is NAD(P)H-quinone oxidoreductase subunit M, chloroplastic.